The primary structure comprises 109 residues: UPF0060 membrane protein mma_0129 (109 aa).

Transmembrane regions (helical) follow at residues 7-27 (VALF…PYLW), 31-51 (GASI…VWLL), 63-83 (AAYG…VDGI), and 87-107 (NWDF…LFAP).

It belongs to the UPF0060 family.

It is found in the cell inner membrane. The chain is UPF0060 membrane protein mma_0129 from Janthinobacterium sp. (strain Marseille) (Minibacterium massiliensis).